The sequence spans 419 residues: UDP-N-acetylglucosamine 1-carboxyvinyltransferase 2 (419 aa).

24–25 lines the phosphoenolpyruvate pocket; that stretch reads KN. UDP-N-acetyl-alpha-D-glucosamine is bound at residue R94. The active-site Proton donor is the C118. C118 is modified (2-(S-cysteinyl)pyruvic acid O-phosphothioketal). UDP-N-acetyl-alpha-D-glucosamine contacts are provided by residues 123–127, D307, and I329; that span reads RPIDQ.

The protein belongs to the EPSP synthase family. MurA subfamily.

The protein localises to the cytoplasm. The catalysed reaction is phosphoenolpyruvate + UDP-N-acetyl-alpha-D-glucosamine = UDP-N-acetyl-3-O-(1-carboxyvinyl)-alpha-D-glucosamine + phosphate. It participates in cell wall biogenesis; peptidoglycan biosynthesis. Cell wall formation. Adds enolpyruvyl to UDP-N-acetylglucosamine. The sequence is that of UDP-N-acetylglucosamine 1-carboxyvinyltransferase 2 from Staphylococcus aureus (strain bovine RF122 / ET3-1).